A 276-amino-acid polypeptide reads, in one-letter code: Sulfur carrier protein FdhD (276 aa).

Cysteine 120 acts as the Cysteine persulfide intermediate in catalysis.

The protein belongs to the FdhD family.

The protein localises to the cytoplasm. In terms of biological role, required for formate dehydrogenase (FDH) activity. Acts as a sulfur carrier protein that transfers sulfur from IscS to the molybdenum cofactor prior to its insertion into FDH. This Bordetella parapertussis (strain 12822 / ATCC BAA-587 / NCTC 13253) protein is Sulfur carrier protein FdhD.